Here is a 305-residue protein sequence, read N- to C-terminus: Putative E3 ubiquitin-protein ligase SINAT1 (305 aa).

The segment at 57–93 (CPVCTNLMYPPIHQCPNGHTLCSSCKLRVQNTCPTCR) adopts an RING-type zinc-finger fold. The tract at residues 107 to 300 (VAESLEVPCR…EELKLRVTGR (194 aa)) is SBD. The segment at 110–170 (SLEVPCRYQN…LVDHLKDDHK (61 aa)) adopts an SIAH-type zinc-finger fold. Residues cysteine 115, cysteine 122, histidine 134, cysteine 138, cysteine 145, cysteine 152, histidine 164, and histidine 169 each contribute to the Zn(2+) site.

Belongs to the SINA (Seven in absentia) family. Interacts with SINAT6. Interacts with ATG6 and TRAF1A. Interacts with WAV3. Interacts with FREE1. Interacts with ELC/VPS23A.

The protein resides in the endosome. Its subcellular location is the multivesicular body. The protein localises to the cytoplasmic vesicle. It is found in the autophagosome. It catalyses the reaction S-ubiquitinyl-[E2 ubiquitin-conjugating enzyme]-L-cysteine + [acceptor protein]-L-lysine = [E2 ubiquitin-conjugating enzyme]-L-cysteine + N(6)-ubiquitinyl-[acceptor protein]-L-lysine.. It functions in the pathway protein modification; protein ubiquitination. E3 ubiquitin-protein ligase that mediates ubiquitination and subsequent proteasomal degradation of target proteins. E3 ubiquitin ligases accept ubiquitin from an E2 ubiquitin-conjugating enzyme in the form of a thioester and then directly transfers the ubiquitin to targeted substrates. It probably triggers the ubiquitin-mediated degradation of different substrates. Mediates the proteasomal-dependent degradation of ATG6, a component of the autophagosome complex. Requires TRAF1A/MUSE14 and TRAF1B/MUSE13 to target ATG6 for ubiquitination and subsequent regulation of autophagosome assembly. Modulates directly the ubiquitination and proteasomal-dependent degradation of FREE1, a component of the ESCRT-I complex. Modulates directly the ubiquitination and proteasomal-dependent degradation of ELC/VPS23A, a component of the ESCRT-I complex. This chain is Putative E3 ubiquitin-protein ligase SINAT1, found in Arabidopsis thaliana (Mouse-ear cress).